The following is a 50-amino-acid chain: Large ribosomal subunit protein eL39 (50 aa).

This sequence belongs to the eukaryotic ribosomal protein eL39 family. Part of the 50S ribosomal subunit. Interacts weakly with protein L23.

Functionally, binds to the 23S rRNA. Forms part of the polypeptide exit tunnel. In Haloarcula marismortui (strain ATCC 43049 / DSM 3752 / JCM 8966 / VKM B-1809) (Halobacterium marismortui), this protein is Large ribosomal subunit protein eL39 (rpl39e).